The following is a 666-amino-acid chain: tRNA 5-methylaminomethyl-2-thiouridine biosynthesis bifunctional protein MnmC (666 aa).

The segment at 1–245 (MKQYAIQPAT…KREMLCGVME (245 aa)) is tRNA (mnm(5)s(2)U34)-methyltransferase. The FAD-dependent cmnm(5)s(2)U34 oxidoreductase stretch occupies residues 270-666 (IGGGIASALL…RKLLKGKAVK (397 aa)).

The protein in the N-terminal section; belongs to the methyltransferase superfamily. tRNA (mnm(5)s(2)U34)-methyltransferase family. It in the C-terminal section; belongs to the DAO family. The cofactor is FAD.

Its subcellular location is the cytoplasm. It carries out the reaction 5-aminomethyl-2-thiouridine(34) in tRNA + S-adenosyl-L-methionine = 5-methylaminomethyl-2-thiouridine(34) in tRNA + S-adenosyl-L-homocysteine + H(+). Its function is as follows. Catalyzes the last two steps in the biosynthesis of 5-methylaminomethyl-2-thiouridine (mnm(5)s(2)U) at the wobble position (U34) in tRNA. Catalyzes the FAD-dependent demodification of cmnm(5)s(2)U34 to nm(5)s(2)U34, followed by the transfer of a methyl group from S-adenosyl-L-methionine to nm(5)s(2)U34, to form mnm(5)s(2)U34. This Salmonella arizonae (strain ATCC BAA-731 / CDC346-86 / RSK2980) protein is tRNA 5-methylaminomethyl-2-thiouridine biosynthesis bifunctional protein MnmC.